Reading from the N-terminus, the 1177-residue chain is DNA-directed RNA polymerase subunit beta' (1177 aa).

The Zn(2+) site is built by Cys-60, Cys-62, Cys-75, and Cys-78. Asp-450, Asp-452, and Asp-454 together coordinate Mg(2+). Zn(2+) is bound by residues Cys-795, Cys-869, Cys-876, and Cys-879.

It belongs to the RNA polymerase beta' chain family. The RNAP catalytic core consists of 2 alpha, 1 beta, 1 beta' and 1 omega subunit. When a sigma factor is associated with the core the holoenzyme is formed, which can initiate transcription. The cofactor is Mg(2+). Zn(2+) is required as a cofactor.

It carries out the reaction RNA(n) + a ribonucleoside 5'-triphosphate = RNA(n+1) + diphosphate. In terms of biological role, DNA-dependent RNA polymerase catalyzes the transcription of DNA into RNA using the four ribonucleoside triphosphates as substrates. The polypeptide is DNA-directed RNA polymerase subunit beta' (Clostridium botulinum (strain Eklund 17B / Type B)).